Here is an 89-residue protein sequence, read N- to C-terminus: Small ribosomal subunit protein uS15 (89 aa).

This sequence belongs to the universal ribosomal protein uS15 family. In terms of assembly, part of the 30S ribosomal subunit. Forms a bridge to the 50S subunit in the 70S ribosome, contacting the 23S rRNA.

In terms of biological role, one of the primary rRNA binding proteins, it binds directly to 16S rRNA where it helps nucleate assembly of the platform of the 30S subunit by binding and bridging several RNA helices of the 16S rRNA. Functionally, forms an intersubunit bridge (bridge B4) with the 23S rRNA of the 50S subunit in the ribosome. The protein is Small ribosomal subunit protein uS15 of Corynebacterium urealyticum (strain ATCC 43042 / DSM 7109).